The following is a 191-amino-acid chain: 3-isopropylmalate dehydratase small subunit (191 aa).

The protein belongs to the LeuD family. LeuD type 1 subfamily. In terms of assembly, heterodimer of LeuC and LeuD.

The enzyme catalyses (2R,3S)-3-isopropylmalate = (2S)-2-isopropylmalate. It participates in amino-acid biosynthesis; L-leucine biosynthesis; L-leucine from 3-methyl-2-oxobutanoate: step 2/4. Catalyzes the isomerization between 2-isopropylmalate and 3-isopropylmalate, via the formation of 2-isopropylmaleate. This Solibacter usitatus (strain Ellin6076) protein is 3-isopropylmalate dehydratase small subunit.